We begin with the raw amino-acid sequence, 504 residues long: CDK5 regulatory subunit-associated protein 3 (504 aa).

3 short sequence motifs (shuffled ATG8-binding motif) span residues isoleucine 266 to glycine 269, isoleucine 290 to glycine 293, and isoleucine 308 to glycine 311. A required for interaction with UFL1 and mediates interaction with CHEK1 region spans residues tryptophan 268–valine 504. The tract at residues aspartate 353–glutamate 368 is RPL10a-binding domain (RBD). Residue lysine 448 forms a Glycyl lysine isopeptide (Lys-Gly) (interchain with G-Cter in SUMO2) linkage.

Belongs to the CDK5RAP3 family. In terms of assembly, substrate adapter component of the UFM1 ribosome E3 ligase (UREL) complex, composed of UFL1, DDRGK1 and CDK5RAP3. Interaction with UFL1 anchors CDK5RAP3 in the cytoplasm, preventing its translocation to the nucleus which allows expression of the CCND1 cyclin and progression of cells through the G1/S transition. Interacts with ATG8 family proteins MAP1LC3A, MAP1LC3B, GABARAP, GABARAPL1 and GABARAPL2. Interacts with CDK5R1; competes with CDK5RAP1 and CDK5RAP2. Interacts with RELA. Interacts with CHEK1; may negatively regulate CHEK1 and thereby stimulate entry into mitosis. Interacts with CDKN2A/ARF and MDM2; forms a ternary complex involved in regulation of p53/TP53. Interacts with MAPK14. Interacts with CCNB1. Interacts with TUBG1; may regulate CDK5RAP3 in mitotic G2/M transition checkpoint. In terms of processing, may be phosphorylated by CDK5. Ubiquitinated. Probably triggers proteasomal degradation and is negatively regulated by UFL1. Post-translationally, may be ufmylated. In terms of processing, cleaved by caspases early during apoptosis, the resulting peptides may play a role in rupture of the nuclear envelope. As to expression, expressed in vascular endothelium. Up-regulated in failing heart. Highly expressed in the ventricular section in subacute and chronic ischemic heart failure.

Its subcellular location is the endoplasmic reticulum membrane. It is found in the cytoplasm. The protein localises to the nucleus. It localises to the cytoskeleton. The protein resides in the microtubule organizing center. Its subcellular location is the centrosome. Functionally, substrate adapter of E3 ligase complexes mediating ufmylation, the covalent attachment of the ubiquitin-like modifier UFM1 to substrate proteins, and which is involved in various processes, such as ribosome recycling and reticulophagy (also called ER-phagy). As part of the UREL complex, plays a key role in ribosome recycling by promoting mono-ufmylation of RPL26/uL24 subunit of the 60S ribosome. Ufmylation of RPL26/uL24 occurs on free 60S ribosomes following ribosome dissociation: it weakens the junction between post-termination 60S subunits and SEC61 translocons, promoting release and recycling of the large ribosomal subunit from the endoplasmic reticulum membrane. Ufmylation of RPL26/uL24 and subsequent 60S ribosome recycling either take place after normal termination of translation or after ribosome stalling during cotranslational translocation at the endoplasmic reticulum. Within the UREL complex, CDK5RAP3 acts as a substrate adapter that constrains UFL1 ligase activity to mono-ufmylate RPL26/uL24 at 'Lys-134'. The UREL complex is also involved in reticulophagy in response to endoplasmic reticulum stress by promoting ufmylation of proteins such as CYB5R3, thereby promoting lysosomal degradation of ufmylated proteins. Also acts as a regulator of transcription: negatively regulates NF-kappa-B-mediated gene transcription through the control of RELA phosphorylation. Also regulates mitotic G2/M transition checkpoint and mitotic G2 DNA damage checkpoint. Through its interaction with CDKN2A/ARF and MDM2 may induce MDM2-dependent p53/TP53 ubiquitination, stabilization and activation in the nucleus, thereby promoting G1 cell cycle arrest and inhibition of cell proliferation. May also play a role in the rupture of the nuclear envelope during apoptosis. May regulate MAPK14 activity by regulating its dephosphorylation by PPM1D/WIP1. Required for liver development. This Rattus norvegicus (Rat) protein is CDK5 regulatory subunit-associated protein 3.